The sequence spans 171 residues: Shikimate kinase (171 aa).

Residue 14-19 participates in ATP binding; it reads GAGKST. Residue S18 participates in Mg(2+) binding. 3 residues coordinate substrate: D36, R60, and G82. R120 serves as a coordination point for ATP. R139 lines the substrate pocket. Position 156 (Q156) interacts with ATP.

The protein belongs to the shikimate kinase family. In terms of assembly, monomer. Mg(2+) is required as a cofactor.

It is found in the cytoplasm. It catalyses the reaction shikimate + ATP = 3-phosphoshikimate + ADP + H(+). The protein operates within metabolic intermediate biosynthesis; chorismate biosynthesis; chorismate from D-erythrose 4-phosphate and phosphoenolpyruvate: step 5/7. Functionally, catalyzes the specific phosphorylation of the 3-hydroxyl group of shikimic acid using ATP as a cosubstrate. The sequence is that of Shikimate kinase from Shewanella putrefaciens (strain CN-32 / ATCC BAA-453).